Here is a 296-residue protein sequence, read N- to C-terminus: HTH-type transcriptional regulator IlvR (296 aa).

An HTH lysR-type domain is found at 1–58 (MDIRQFRHFAAVAETLHFGRAAERLGITQPPLSQSIQALEKALGAPLFARTKRHVELT). The segment at residues 18 to 37 (FGRAAERLGITQPPLSQSIQ) is a DNA-binding region (H-T-H motif).

It belongs to the LysR transcriptional regulatory family.

In terms of biological role, positively regulates the expression of the ilvD gene while negatively autoregulating its own expression. This chain is HTH-type transcriptional regulator IlvR (ilvR), found in Caulobacter vibrioides (strain ATCC 19089 / CIP 103742 / CB 15) (Caulobacter crescentus).